Here is a 54-residue protein sequence, read N- to C-terminus: Ribulose bisphosphate carboxylase large chain (54 aa).

A propeptide spanning residues 1–2 is cleaved from the precursor; sequence MS. Pro3 is subject to N-acetylproline. The residue at position 14 (Lys14) is an N6,N6,N6-trimethyllysine.

Belongs to the RuBisCO large chain family. Type I subfamily. Heterohexadecamer of 8 large chains and 8 small chains.

Its subcellular location is the plastid. The protein resides in the chloroplast. The catalysed reaction is 2 (2R)-3-phosphoglycerate + 2 H(+) = D-ribulose 1,5-bisphosphate + CO2 + H2O. It carries out the reaction D-ribulose 1,5-bisphosphate + O2 = 2-phosphoglycolate + (2R)-3-phosphoglycerate + 2 H(+). Functionally, ruBisCO catalyzes two reactions: the carboxylation of D-ribulose 1,5-bisphosphate, the primary event in carbon dioxide fixation, as well as the oxidative fragmentation of the pentose substrate in the photorespiration process. Both reactions occur simultaneously and in competition at the same active site. The sequence is that of Ribulose bisphosphate carboxylase large chain (rbcL) from Icacina mannii.